Reading from the N-terminus, the 489-residue chain is Glycogen synthase (489 aa).

Residue arginine 20 coordinates ADP-alpha-D-glucose.

This sequence belongs to the glycosyltransferase 1 family. Bacterial/plant glycogen synthase subfamily.

The enzyme catalyses [(1-&gt;4)-alpha-D-glucosyl](n) + ADP-alpha-D-glucose = [(1-&gt;4)-alpha-D-glucosyl](n+1) + ADP + H(+). It functions in the pathway glycan biosynthesis; glycogen biosynthesis. In terms of biological role, synthesizes alpha-1,4-glucan chains using ADP-glucose. The protein is Glycogen synthase of Chlorobium luteolum (strain DSM 273 / BCRC 81028 / 2530) (Pelodictyon luteolum).